The chain runs to 63 residues: Large ribosomal subunit protein bL28 (63 aa).

Belongs to the bacterial ribosomal protein bL28 family.

The sequence is that of Large ribosomal subunit protein bL28 from Kosmotoga olearia (strain ATCC BAA-1733 / DSM 21960 / TBF 19.5.1).